Reading from the N-terminus, the 396-residue chain is Ribosomal RNA small subunit methyltransferase H (396 aa).

Residues 101–103 (GGH), Asp-120, Tyr-147, Asp-171, and Gln-178 contribute to the S-adenosyl-L-methionine site.

This sequence belongs to the methyltransferase superfamily. RsmH family.

Its subcellular location is the cytoplasm. The enzyme catalyses cytidine(1402) in 16S rRNA + S-adenosyl-L-methionine = N(4)-methylcytidine(1402) in 16S rRNA + S-adenosyl-L-homocysteine + H(+). Specifically methylates the N4 position of cytidine in position 1402 (C1402) of 16S rRNA. This Mycobacterium bovis (strain ATCC BAA-935 / AF2122/97) protein is Ribosomal RNA small subunit methyltransferase H.